A 37-amino-acid chain; its full sequence is Large ribosomal subunit protein bL36 (37 aa).

Belongs to the bacterial ribosomal protein bL36 family.

The polypeptide is Large ribosomal subunit protein bL36 (Bacillus pumilus (strain SAFR-032)).